The following is a 303-amino-acid chain: Dihydroorotate dehydrogenase B (NAD(+)), catalytic subunit (303 aa).

FMN is bound by residues Ser23 and 47-48 (KS). Substrate contacts are provided by residues Lys47, 71–75 (NAMGL), and Asn125. Asn125 contributes to the FMN binding site. Catalysis depends on Cys128, which acts as the Nucleophile. Lys163 and Ile189 together coordinate FMN. Position 190-191 (190-191 (NT)) interacts with substrate. FMN-binding positions include Gly215, 241–242 (GG), and 263–264 (GT).

This sequence belongs to the dihydroorotate dehydrogenase family. Type 1 subfamily. Heterotetramer of 2 PyrK and 2 PyrD type B subunits. It depends on FMN as a cofactor.

It is found in the cytoplasm. The catalysed reaction is (S)-dihydroorotate + NAD(+) = orotate + NADH + H(+). It functions in the pathway pyrimidine metabolism; UMP biosynthesis via de novo pathway; orotate from (S)-dihydroorotate (NAD(+) route): step 1/1. Functionally, catalyzes the conversion of dihydroorotate to orotate with NAD(+) as electron acceptor. This Pyrococcus horikoshii (strain ATCC 700860 / DSM 12428 / JCM 9974 / NBRC 100139 / OT-3) protein is Dihydroorotate dehydrogenase B (NAD(+)), catalytic subunit (pyrD).